Reading from the N-terminus, the 230-residue chain is Cyclin-dependent kinase inhibitor rum1 (230 aa).

3 disordered regions span residues 1–25, 43–118, and 188–230; these read MEPS…SFKG, PESD…DGLY, and SRVP…NLLR. Residue threonine 13 is modified to Phosphothreonine; by MAPK. Serine 19 is modified (phosphoserine; by MAPK). 2 positions are modified to phosphothreonine; by cdc2: threonine 58 and threonine 62. Positions 67–147 are CDK inhibitory and cyclin-binding; that stretch reads LLPNLMLQDR…TFKPKLLFAD (81 aa). Basic and acidic residues predominate over residues 78–91; sequence NSLERCMEEDREHN. The span at 93–102 shows a compositional bias: polar residues; that stretch reads FLSSSDNQLL. The segment at 101-230 is required for activity as a cdc2 kinase inhibitor; the sequence is LLSRKKRKPT…KDENRHNLLR (130 aa). Over residues 188–199 the composition is skewed to low complexity; sequence SRVPSSSSGSFV. Positions 219–230 are enriched in basic and acidic residues; sequence NTKDENRHNLLR.

Interacts with cdc13, cig2 and pop1. Post-translationally, phosphorylated by cig1-associated cdc2 which leads to increased stability. Phosphorylation by MAPK reduces cdc2 kinase inhibitor ability.

Its subcellular location is the nucleus. Functionally, regulator of cell cycle G1 phase progression. Ensures the correct sequence of S phase and mitosis in the cell by acting as an inhibitor of the cdc2 mitotic kinase. Probably interacts with cdc2 to inhibit its action until the cell mass for Start is reached. Determines the length of the pre-Start G1 period and prevents mitosis from happening in early G1 cells. Required for maintaining pheromone-induced G1 arrest. Acts as an adapter protein since interaction with cdc13 promotes cyclin proteolysis during G1. Becomes a target for degradation at the G1/S phase transition, following phosphorylation by cig1-associated cdc2 at the G1/S phase transition. This chain is Cyclin-dependent kinase inhibitor rum1 (rum1), found in Schizosaccharomyces pombe (strain 972 / ATCC 24843) (Fission yeast).